Here is a 642-residue protein sequence, read N- to C-terminus: Serotransferrin (642 aa).

Transferrin-like domains follow at residues G1–K280 and I290–Q621. Positions 25 and 54 each coordinate Fe(3+). 3 cysteine pairs are disulfide-bonded: C77-C158, C121-C137, and C186-C200. Hydrogencarbonate contacts are provided by T79, K83, A85, and G86. Position 152 (Y152) interacts with Fe(3+). Fe(3+) is bound at residue H208. 2 disulfides stabilise this stretch: C293/C329 and C303/C320. D344 is a Fe(3+) binding site. Disulfide bonds link C354-C633, C369-C594, C402-C480, C426-C622, C436-C450, C447-C463, and C520-C535. N-linked (GlcNAc...) asparagine glycosylation is present at N365. Y379 contacts Fe(3+). Hydrogencarbonate-binding residues include T404, R408, A410, and G411. Y474 lines the Fe(3+) pocket. Residue H543 participates in Fe(3+) binding.

It belongs to the transferrin family. In terms of assembly, monomer. Brain and liver; to a lesser extent in kidney and heart.

The protein localises to the secreted. In terms of biological role, transferrins are iron binding transport proteins which can bind two Fe(3+) ions in association with the binding of an anion, usually bicarbonate. The chain is Serotransferrin (tf) from Gadus morhua (Atlantic cod).